The primary structure comprises 475 residues: Ribulose bisphosphate carboxylase large chain (475 aa).

Positions 1–2 are excised as a propeptide; sequence MS. An N-acetylproline modification is found at proline 3. Lysine 14 is modified (N6,N6,N6-trimethyllysine). Substrate is bound by residues asparagine 123 and threonine 173. Catalysis depends on lysine 175, which acts as the Proton acceptor. Residue lysine 177 participates in substrate binding. Residues lysine 201, aspartate 203, and glutamate 204 each coordinate Mg(2+). N6-carboxylysine is present on lysine 201. Histidine 294 serves as the catalytic Proton acceptor. Substrate-binding residues include arginine 295, histidine 327, and serine 379.

Belongs to the RuBisCO large chain family. Type I subfamily. As to quaternary structure, heterohexadecamer of 8 large chains and 8 small chains; disulfide-linked. The disulfide link is formed within the large subunit homodimers. Mg(2+) is required as a cofactor. The disulfide bond which can form in the large chain dimeric partners within the hexadecamer appears to be associated with oxidative stress and protein turnover.

The protein resides in the plastid. Its subcellular location is the chloroplast. It carries out the reaction 2 (2R)-3-phosphoglycerate + 2 H(+) = D-ribulose 1,5-bisphosphate + CO2 + H2O. The enzyme catalyses D-ribulose 1,5-bisphosphate + O2 = 2-phosphoglycolate + (2R)-3-phosphoglycerate + 2 H(+). In terms of biological role, ruBisCO catalyzes two reactions: the carboxylation of D-ribulose 1,5-bisphosphate, the primary event in carbon dioxide fixation, as well as the oxidative fragmentation of the pentose substrate in the photorespiration process. Both reactions occur simultaneously and in competition at the same active site. In Lotus japonicus (Lotus corniculatus var. japonicus), this protein is Ribulose bisphosphate carboxylase large chain.